An 884-amino-acid polypeptide reads, in one-letter code: Translation initiation factor IF-2 (884 aa).

The disordered stretch occupies residues 93 to 288 (VNTPEAEQAK…KGKRKPSTLQ (196 aa)). Residues 99–209 (EQAKAEEQAQ…KMAAENEGKW (111 aa)) are compositionally biased toward basic and acidic residues. The segment covering 216-229 (QTESADYHVTTSQH) has biased composition (polar residues). Over residues 231–246 (RAAEDENDAKVEGDRR) the composition is skewed to basic and acidic residues. Positions 247–261 (SRTRGGKATKQKKGN) are enriched in basic residues. Over residues 262–275 (KLSESKADREEARA) the composition is skewed to basic and acidic residues. The region spanning 383–552 (HRAPVVTIMG…LLQAEVLELK (170 aa)) is the tr-type G domain. The tract at residues 392 to 399 (GHVDHGKT) is G1. 392–399 (GHVDHGKT) contributes to the GTP binding site. The segment at 417 to 421 (GITQH) is G2. The segment at 438 to 441 (DTPG) is G3. Residues 438–442 (DTPGH) and 492–495 (NKID) each bind GTP. A G4 region spans residues 492-495 (NKID). A G5 region spans residues 528-530 (SAK).

Belongs to the TRAFAC class translation factor GTPase superfamily. Classic translation factor GTPase family. IF-2 subfamily.

It is found in the cytoplasm. One of the essential components for the initiation of protein synthesis. Protects formylmethionyl-tRNA from spontaneous hydrolysis and promotes its binding to the 30S ribosomal subunits. Also involved in the hydrolysis of GTP during the formation of the 70S ribosomal complex. The polypeptide is Translation initiation factor IF-2 (Yersinia pestis bv. Antiqua (strain Angola)).